The following is a 631-amino-acid chain: 1-deoxy-D-xylulose-5-phosphate synthase (631 aa).

Residues His-74 and Gly-115–Ser-117 each bind thiamine diphosphate. Asp-146 is a Mg(2+) binding site. Residues Gly-147–Ala-148, Asn-175, Tyr-286, and Glu-368 each bind thiamine diphosphate. Asn-175 contacts Mg(2+).

This sequence belongs to the transketolase family. DXPS subfamily. As to quaternary structure, homodimer. Requires Mg(2+) as cofactor. Thiamine diphosphate is required as a cofactor.

The catalysed reaction is D-glyceraldehyde 3-phosphate + pyruvate + H(+) = 1-deoxy-D-xylulose 5-phosphate + CO2. Its pathway is metabolic intermediate biosynthesis; 1-deoxy-D-xylulose 5-phosphate biosynthesis; 1-deoxy-D-xylulose 5-phosphate from D-glyceraldehyde 3-phosphate and pyruvate: step 1/1. Functionally, catalyzes the acyloin condensation reaction between C atoms 2 and 3 of pyruvate and glyceraldehyde 3-phosphate to yield 1-deoxy-D-xylulose-5-phosphate (DXP). The polypeptide is 1-deoxy-D-xylulose-5-phosphate synthase (Natranaerobius thermophilus (strain ATCC BAA-1301 / DSM 18059 / JW/NM-WN-LF)).